The primary structure comprises 311 residues: GTP cyclohydrolase MptA (311 aa).

It belongs to the GTP cyclohydrolase IV family. As to quaternary structure, homodimer. Fe(2+) serves as cofactor.

The catalysed reaction is GTP + H2O = 7,8-dihydroneopterin 2',3'-cyclic phosphate + formate + diphosphate + H(+). Its pathway is cofactor biosynthesis; 5,6,7,8-tetrahydromethanopterin biosynthesis. Functionally, converts GTP to 7,8-dihydro-D-neopterin 2',3'-cyclic phosphate, the first intermediate in the biosynthesis of coenzyme methanopterin. This Halobacterium salinarum (strain ATCC 29341 / DSM 671 / R1) protein is GTP cyclohydrolase MptA.